Here is a 383-residue protein sequence, read N- to C-terminus: Adaptive-response sensory kinase SasA (383 aa).

The region spanning 152–365 (MVAHELRTPL…CFTFTVPIWQ (214 aa)) is the Histidine kinase domain. The residue at position 155 (H155) is a Phosphohistidine; by autocatalysis.

Homooligomerizes. Interacts with KaiC. Participates in the KaiABC clock complex, whose core is composed of a KaiC homohexamer, 6 KaiB and up to 6 KaiA dimers. SasA and KaiB(fs) compete to bind to KaiC.

It catalyses the reaction ATP + protein L-histidine = ADP + protein N-phospho-L-histidine.. Functionally, member of the two-component regulatory system SasA/RpaA involved in genome-wide circadian gene expression. One of several clock output pathways. Participates in the Kai clock protein complex, the main circadian regulator in cyanobacteria, via its interaction with KaiC. KaiC enhances the autophosphorylation activity of SasA, which then transfers its phosphate group to RpaA to activate it. In addition to its output function, recruits fold-shifted KaiB (KaiB(fs)) to KaiC to cooperatively form the KaiB(6):KaiC(6) complex (independent of SasA kinase activity). Required for robustness of the circadian rhythm of gene expression and is involved in clock output, also required for adaptation to light/dark cycles. This is Adaptive-response sensory kinase SasA from Parasynechococcus marenigrum (strain WH8102).